The sequence spans 199 residues: NADH-quinone oxidoreductase subunit C (199 aa).

This sequence belongs to the complex I 30 kDa subunit family. In terms of assembly, NDH-1 is composed of 14 different subunits. Subunits NuoB, C, D, E, F, and G constitute the peripheral sector of the complex.

It localises to the cell membrane. It carries out the reaction a quinone + NADH + 5 H(+)(in) = a quinol + NAD(+) + 4 H(+)(out). NDH-1 shuttles electrons from NADH, via FMN and iron-sulfur (Fe-S) centers, to quinones in the respiratory chain. The immediate electron acceptor for the enzyme in this species is believed to be ubiquinone. Couples the redox reaction to proton translocation (for every two electrons transferred, four hydrogen ions are translocated across the cytoplasmic membrane), and thus conserves the redox energy in a proton gradient. This chain is NADH-quinone oxidoreductase subunit C, found in Polynucleobacter asymbioticus (strain DSM 18221 / CIP 109841 / QLW-P1DMWA-1) (Polynucleobacter necessarius subsp. asymbioticus).